Reading from the N-terminus, the 199-residue chain is uncharacterized protein (199 aa).

6 consecutive transmembrane segments (helical) span residues 1–21 (MEQF…TFIF), 28–48 (IAVS…IALY), 51–71 (LNAA…YLGM), 83–103 (LVAA…WFII), 127–147 (QLVL…FVIQ), and 154–174 (AVGG…LFGI).

It is found in the cell membrane. This is an uncharacterized protein from Bacillus subtilis (strain 168).